Consider the following 189-residue polypeptide: Adenylate kinase (189 aa).

10 to 15 provides a ligand contact to ATP; it reads AAGKGT. Residues 30-59 form an NMP region; it reads STGDMLRAARASGSELGQRVAKIMDEGGLV. AMP contacts are provided by residues Thr-31, Arg-36, 57–59, 85–88, and Gln-92; these read GLV and GFPR. An LID region spans residues 126–136; it reads KRFEEQGRADD. Arg-127 contacts ATP. Arg-133 and Arg-144 together coordinate AMP. Gly-172 lines the ATP pocket.

It belongs to the adenylate kinase family. In terms of assembly, monomer.

Its subcellular location is the cytoplasm. The catalysed reaction is AMP + ATP = 2 ADP. The protein operates within purine metabolism; AMP biosynthesis via salvage pathway; AMP from ADP: step 1/1. Its function is as follows. Catalyzes the reversible transfer of the terminal phosphate group between ATP and AMP. Plays an important role in cellular energy homeostasis and in adenine nucleotide metabolism. This Hyphomonas neptunium (strain ATCC 15444) protein is Adenylate kinase.